Here is a 1002-residue protein sequence, read N- to C-terminus: Calmin (1002 aa).

An actin-binding region spans residues 1 to 288; the sequence is MAAHEWDWFQ…IMTYVAQFLE (288 aa). Residues 32 to 139 form the Calponin-homology (CH) 1 domain; sequence NVQKRTFTRW…LIWNIILFFQ (108 aa). The segment covering 149–168 has biased composition (low complexity); it reads RNSPSSSLSPGSGGTDSDSS. Residues 149-180 are disordered; sequence RNSPSSSLSPGSGGTDSDSSFPPTPTAERSVA. The region spanning 187-291 is the Calponin-homology (CH) 2 domain; it reads RKAIKALLAW…YVAQFLERFP (105 aa). Serine 301 and serine 402 each carry phosphoserine. Disordered regions lie at residues 389–418, 500–532, 581–716, and 749–911; these read QGGPGKTSDISEPSPESSILSSRKENGRSN, NNNSQSSSCNGALESTARHDEESHSLSPPGENT, NKVP…SPPL, and DLKN…DSSI. The segment covering 396–409 has biased composition (low complexity); the sequence is SDISEPSPESSILS. Positions 500–509 are enriched in polar residues; the sequence is NNNSQSSSCN. Positions 585-606 are enriched in basic and acidic residues; sequence SPHETKPDEDAEAFENHAEKLG. Basic residues predominate over residues 607-617; sequence KRSIKSAHKKK. 2 stretches are compositionally biased toward basic and acidic residues: residues 618–635 and 650–659; these read DSPEPQVKMDKHEPHQDS and PVDKKPEVHE. Serine 619 bears the Phosphoserine mark. The span at 681–697 shows a compositional bias: low complexity; sequence GVGEELSSSPPSSCVSL. Phosphothreonine is present on threonine 699. A phosphoserine mark is found at serine 713 and serine 769. Residues 776-794 are compositionally biased toward low complexity; it reads GSQSSSSSSVPGESLPSAS. Positions 818–834 are enriched in basic and acidic residues; the sequence is PHEDHQQRETKENDPMD. Residues 835-846 show a composition bias toward polar residues; it reads SHQSQESPNLEN. Phosphoserine is present on residues serine 838 and serine 841. A compositionally biased stretch (basic and acidic residues) spans 854 to 863; it reads NVTKESISSK. Over residues 898–910 the composition is skewed to polar residues; sequence YSIPSRTSHSDSS. Serine 907 is subject to Phosphoserine. The helical; Anchor for type IV membrane protein transmembrane segment at 977-997 threads the bilayer; the sequence is MMYFILFLWLLVYCLLLFPQL.

Widely expressed at intermediate level.

The protein resides in the membrane. The chain is Calmin (CLMN) from Homo sapiens (Human).